The chain runs to 187 residues: Elongation factor P (187 aa).

The protein belongs to the elongation factor P family.

Its subcellular location is the cytoplasm. Its pathway is protein biosynthesis; polypeptide chain elongation. In terms of biological role, involved in peptide bond synthesis. Stimulates efficient translation and peptide-bond synthesis on native or reconstituted 70S ribosomes in vitro. Probably functions indirectly by altering the affinity of the ribosome for aminoacyl-tRNA, thus increasing their reactivity as acceptors for peptidyl transferase. The chain is Elongation factor P (efp) from Helicobacter pylori (strain J99 / ATCC 700824) (Campylobacter pylori J99).